A 215-amino-acid polypeptide reads, in one-letter code: Phosphatidylserine decarboxylase proenzyme (215 aa).

S183 acts as the Schiff-base intermediate with substrate; via pyruvic acid in catalysis. The residue at position 183 (S183) is a Pyruvic acid (Ser); by autocatalysis.

The protein belongs to the phosphatidylserine decarboxylase family. PSD-A subfamily. Heterodimer of a large membrane-associated beta subunit and a small pyruvoyl-containing alpha subunit. It depends on pyruvate as a cofactor. Post-translationally, is synthesized initially as an inactive proenzyme. Formation of the active enzyme involves a self-maturation process in which the active site pyruvoyl group is generated from an internal serine residue via an autocatalytic post-translational modification. Two non-identical subunits are generated from the proenzyme in this reaction, and the pyruvate is formed at the N-terminus of the alpha chain, which is derived from the carboxyl end of the proenzyme. The post-translation cleavage follows an unusual pathway, termed non-hydrolytic serinolysis, in which the side chain hydroxyl group of the serine supplies its oxygen atom to form the C-terminus of the beta chain, while the remainder of the serine residue undergoes an oxidative deamination to produce ammonia and the pyruvoyl prosthetic group on the alpha chain.

The protein resides in the cell membrane. It carries out the reaction a 1,2-diacyl-sn-glycero-3-phospho-L-serine + H(+) = a 1,2-diacyl-sn-glycero-3-phosphoethanolamine + CO2. Its pathway is phospholipid metabolism; phosphatidylethanolamine biosynthesis; phosphatidylethanolamine from CDP-diacylglycerol: step 2/2. Functionally, catalyzes the formation of phosphatidylethanolamine (PtdEtn) from phosphatidylserine (PtdSer). The chain is Phosphatidylserine decarboxylase proenzyme from Symbiobacterium thermophilum (strain DSM 24528 / JCM 14929 / IAM 14863 / T).